A 398-amino-acid chain; its full sequence is Signal-regulatory protein beta-1 (398 aa).

A signal peptide spans M1–G29. The Ig-like V-type domain occupies E30–G136. At E30–L371 the chain is on the extracellular side. 2 disulfides stabilise this stretch: C54–C120 and C169–C227. Ig-like C1-type domains lie at P147–S246 and P253–E347. N-linked (GlcNAc...) asparagine glycosylation is found at N244, N269, and N291. The chain crosses the membrane as a helical span at residues L372 to I392. The Cytoplasmic segment spans residues C393–A398.

As to quaternary structure, homodimer; disulfide-linked. Interacts with TYROBP. This interaction results in the recruitment of SYK. N-glycosylated. As to expression, detected in monocytes and dendritic cells.

Its subcellular location is the cell membrane. Immunoglobulin-like cell surface receptor involved in the negative regulation of receptor tyrosine kinase-coupled signaling processes. Also participates in the recruitment of tyrosine kinase SYK. Triggers activation of myeloid cells when associated with TYROBP. This is Signal-regulatory protein beta-1 (SIRPB1) from Homo sapiens (Human).